Here is a 465-residue protein sequence, read N- to C-terminus: Purple acid phosphatase 2 (465 aa).

Positions 1 to 32 (MGASRTGCYLLAVVLAAVMNAAIAGITSSFIR) are cleaved as a signal peptide. Residues asparagine 110 and asparagine 138 are each glycosylated (N-linked (GlcNAc...) asparagine). Aspartate 164 is a binding site for Fe cation. Asparagine 172 is a glycosylation site (N-linked (GlcNAc...) asparagine). Fe cation is bound by residues aspartate 193 and tyrosine 196. Residue aspartate 193 participates in Mn(2+) binding. Asparagine 230 lines the Mn(2+) pocket. Position 230 (asparagine 230) interacts with substrate. Asparagine 303 carries an N-linked (GlcNAc...) asparagine glycan. Histidine 315 contacts Mn(2+). Histidine 325 (proton donor) is an active-site residue. A Mn(2+)-binding site is contributed by histidine 352. 352–354 (HVH) is a substrate binding site. Histidine 354 serves as a coordination point for Fe cation. N-linked (GlcNAc...) asparagine glycosylation is found at asparagine 400 and asparagine 425.

It belongs to the metallophosphoesterase superfamily. Purple acid phosphatase family. In terms of assembly, homodimer; disulfide-linked. Requires Fe cation as cofactor. Mn(2+) is required as a cofactor. Zn(2+) serves as cofactor. The cofactor is Cu(2+). It depends on Mg(2+) as a cofactor.

The protein resides in the secreted. The enzyme catalyses a phosphate monoester + H2O = an alcohol + phosphate. In Ipomoea batatas (Sweet potato), this protein is Purple acid phosphatase 2 (PAP2).